We begin with the raw amino-acid sequence, 466 residues long: UDP-N-acetylmuramoylalanine--D-glutamate ligase (466 aa).

121 to 127 contributes to the ATP binding site; sequence GTNGKST.

Belongs to the MurCDEF family.

The protein resides in the cytoplasm. It carries out the reaction UDP-N-acetyl-alpha-D-muramoyl-L-alanine + D-glutamate + ATP = UDP-N-acetyl-alpha-D-muramoyl-L-alanyl-D-glutamate + ADP + phosphate + H(+). It functions in the pathway cell wall biogenesis; peptidoglycan biosynthesis. Cell wall formation. Catalyzes the addition of glutamate to the nucleotide precursor UDP-N-acetylmuramoyl-L-alanine (UMA). The polypeptide is UDP-N-acetylmuramoylalanine--D-glutamate ligase (Bradyrhizobium diazoefficiens (strain JCM 10833 / BCRC 13528 / IAM 13628 / NBRC 14792 / USDA 110)).